A 354-amino-acid polypeptide reads, in one-letter code: Cytoplasmic tRNA 2-thiolation protein 1 (354 aa).

This sequence belongs to the TtcA family. CTU1/NCS6/ATPBD3 subfamily.

It is found in the cytoplasm. The protein operates within tRNA modification; 5-methoxycarbonylmethyl-2-thiouridine-tRNA biosynthesis. In terms of biological role, plays a central role in 2-thiolation of mcm(5)S(2)U at tRNA wobble positions of tRNA(Lys), tRNA(Glu) and tRNA(Gln). Directly binds tRNAs and probably acts by catalyzing adenylation of tRNAs, an intermediate required for 2-thiolation. It is unclear whether it acts as a sulfurtransferase that transfers sulfur from thiocarboxylated URM1 onto the uridine of tRNAs at wobble position. Prior mcm(5) tRNA modification by the elongator complex is required for 2-thiolation. May also be involved in protein urmylation. The sequence is that of Cytoplasmic tRNA 2-thiolation protein 1 from Laccaria bicolor (strain S238N-H82 / ATCC MYA-4686) (Bicoloured deceiver).